The sequence spans 122 residues: MIQMQSMLEVADNSGAKKVMCIKVLGGSHHMVAKLGDVIVVSVKDAIPGGKVKKGDVYKGVIVRTKTGVVRPDGSTIKFDKNALVLLNKQDEPIGTRVFGPVTRELRAKKYVRIMSLAEEVL.

The protein belongs to the universal ribosomal protein uL14 family. As to quaternary structure, part of the 50S ribosomal subunit. Forms a cluster with proteins L3 and L19. In the 70S ribosome, L14 and L19 interact and together make contacts with the 16S rRNA in bridges B5 and B8.

Its function is as follows. Binds to 23S rRNA. Forms part of two intersubunit bridges in the 70S ribosome. The sequence is that of Large ribosomal subunit protein uL14 from Rickettsia massiliae (strain Mtu5).